Consider the following 952-residue polypeptide: GATA zinc finger domain-containing protein 5 (952 aa).

2 disordered regions span residues 1-36 (MDYQ…DSPS) and 138-197 (PTPL…SPKQ). Polar residues predominate over residues 10–24 (QISQEFPTDISTTKS). A compositionally biased stretch (pro residues) spans 148 to 157 (SPPPPPPPPA). Over residues 158-196 (ATTTTTITTTTTTSAGNSTTKNNNNNNNNNNNNNGKSPK) the composition is skewed to low complexity. A GATA-type zinc finger spans residues 241 to 266 (CYQCNTSNTPEWRKGPEGPATLCNAC). 4 disordered regions span residues 380 to 418 (MTPS…HEQP), 433 to 478 (LLSS…GGGG), 634 to 699 (QNNS…NKNN), and 732 to 816 (QQQE…LSVN). Residues 393–412 (KTTKTKPKPKSKSKPGKITH) are compositionally biased toward basic residues. The span at 445–467 (SSSSSCGTSLNSSLGSSSGTITN) shows a compositional bias: low complexity. Gly residues predominate over residues 468–478 (SGGGSSGGGGG). A compositionally biased stretch (polar residues) spans 634-653 (QNNSFSGPNDQNPYVPSVSL). 3 stretches are compositionally biased toward low complexity: residues 654–668 (NSNK…NNNK), 678–699 (NNKN…NKNN), and 732–745 (QQQE…EQQQ). Residues 746-762 (NLSINNSNQTNENEILG) show a composition bias toward polar residues. Residues 763–814 (TTTTTTTSTATIITSQVPMNLSPNSDDNQSSSNYSTLSDSGSSPTDSFSGLS) show a composition bias toward low complexity.

The chain is GATA zinc finger domain-containing protein 5 (gtaE) from Dictyostelium discoideum (Social amoeba).